We begin with the raw amino-acid sequence, 453 residues long: Putative receptor-like protein kinase At2g30940 (453 aa).

A helical membrane pass occupies residues 60 to 80 (ASASIAFLLVLIISVLLCFIF). Thr155 carries the post-translational modification Phosphothreonine. Residues 166–428 (FADDNVITKG…IHMLQPHDLL (263 aa)) enclose the Protein kinase domain. ATP is bound by residues 172-180 (ITKGDSSTV) and Lys194. Tyr240 carries the post-translational modification Phosphotyrosine. Catalysis depends on Asp293, which acts as the Proton acceptor. Ser297 carries the post-translational modification Phosphoserine. Phosphothreonine is present on Thr322.

Belongs to the protein kinase superfamily.

Its subcellular location is the cell membrane. It carries out the reaction L-seryl-[protein] + ATP = O-phospho-L-seryl-[protein] + ADP + H(+). The enzyme catalyses L-threonyl-[protein] + ATP = O-phospho-L-threonyl-[protein] + ADP + H(+). This is Putative receptor-like protein kinase At2g30940 from Arabidopsis thaliana (Mouse-ear cress).